We begin with the raw amino-acid sequence, 237 residues long: Ribosomal RNA small subunit methyltransferase G (237 aa).

The segment at 1–25 (MASRHSPQTAAQPDAADKAQALRLT) is disordered. Residues 7–21 (PQTAAQPDAADKAQA) are compositionally biased toward low complexity. Gly85, Phe90, and Arg155 together coordinate S-adenosyl-L-methionine.

It belongs to the methyltransferase superfamily. RNA methyltransferase RsmG family.

The protein localises to the cytoplasm. It catalyses the reaction guanosine(527) in 16S rRNA + S-adenosyl-L-methionine = N(7)-methylguanosine(527) in 16S rRNA + S-adenosyl-L-homocysteine. Its function is as follows. Specifically methylates the N7 position of guanine in position 527 of 16S rRNA. This Rhodopseudomonas palustris (strain HaA2) protein is Ribosomal RNA small subunit methyltransferase G.